The sequence spans 536 residues: MFS-type efflux pump MFS1 (536 aa).

The next 3 helical transmembrane spans lie at 30 to 50 (VTGLKLAVIVTGLCLSVLLVA), 80 to 100 (YLLTICAFQLIFGKIYTFFPV), and 102 to 122 (WVFLIAITIFEIGSAICGAAP). Residue Asn-123 is glycosylated (N-linked (GlcNAc...) asparagine). The next 3 helical transmembrane spans lie at 133–153 (VAGIGSAGIFSGALIIIAYSI), 163–183 (GAIGGMYGIASVAGPLMGGAF), and 191–211 (WCFYINLPIGAVTILSILIFL). The N-linked (GlcNAc...) asparagine glycan is linked to Asn-221. 8 helical membrane passes run 234–254 (IGTAFFMPSIICLLLALQWGG), 264–284 (IIALFVVFAVLISGFIYFQIR), 306–326 (FFLFTIGSAFFIMVYYLPIWF), 342–362 (IPMVLSLVVLSIASGITVTAI), 366–386 (APLYYVSTVLTSIGAGLLTTF), 400–420 (IIFGAGVGTGLQLSIIAAQAV), 426–446 (VAVGTVIMMFCQTLGGALFVS), and 503–523 (TWYVATALAALSVIGSVGMEW).

This sequence belongs to the major facilitator superfamily. TCR/Tet family.

It localises to the cell membrane. In terms of biological role, MFS-type efflux pump involved in the modulation susceptibility to azoles, including fluconazole, itraconazole, ketoconazole, miconazole and voriconazole. Confers also increased resistance chloramphenicol and thiamphenicol, suggesting that it acts as a pleiotropic drug transporter with a broad substrate spectrum. Finally, increases the tolerance to cycloheximide when expressed in S.cerevisiae, but not in dermatophyte species. This chain is MFS-type efflux pump MFS1, found in Trichophyton rubrum (strain ATCC MYA-4607 / CBS 118892) (Athlete's foot fungus).